The sequence spans 294 residues: Acetylglutamate kinase (294 aa).

Substrate-binding positions include 47 to 48, Arg69, and Asn168; that span reads GG.

Belongs to the acetylglutamate kinase family. ArgB subfamily.

The protein localises to the cytoplasm. The catalysed reaction is N-acetyl-L-glutamate + ATP = N-acetyl-L-glutamyl 5-phosphate + ADP. The protein operates within amino-acid biosynthesis; L-arginine biosynthesis; N(2)-acetyl-L-ornithine from L-glutamate: step 2/4. Catalyzes the ATP-dependent phosphorylation of N-acetyl-L-glutamate. The sequence is that of Acetylglutamate kinase from Corynebacterium glutamicum (strain ATCC 13032 / DSM 20300 / JCM 1318 / BCRC 11384 / CCUG 27702 / LMG 3730 / NBRC 12168 / NCIMB 10025 / NRRL B-2784 / 534).